The primary structure comprises 445 residues: UPF0210 protein SPP_0289 (445 aa).

The protein belongs to the UPF0210 family. In terms of assembly, homodimer.

In Streptococcus pneumoniae (strain P1031), this protein is UPF0210 protein SPP_0289.